Reading from the N-terminus, the 487-residue chain is Probable glutamate receptor (487 aa).

The signal sequence occupies residues 1-23 (MDKGLHFIFCVVTAVLLLRESSQ). The Extracellular portion of the chain corresponds to 24–169 (TGAMRNDDAM…FFHFLAPFSK (146 aa)). N-linked (GlcNAc...) asparagine glycosylation is present at asparagine 104. A helical transmembrane segment spans residues 170 to 190 (ETWTGLLFAYVLTCVCLFLVA). At 191–235 (RLSPCEWNEPKNEENHFTFLNSLWFGAGALTLQGVTPRPKAFSVR) the chain is on the cytoplasmic side. Residues 236–256 (VIAAIWWLFTIALLAAYIANF) form a helical membrane-spanning segment. Residues 257 to 419 (TALLSSGSEQ…EGWSPLQPQA (163 aa)) lie on the Extracellular side of the membrane. The helical transmembrane segment at 420-440 (LGGLFLTLAIGLALGVIAAMV) threads the bilayer. Residues 441–487 (ELSNKSRHAAGHIKKSCCSIFTEEMCTRLRIKENTRQTQETSGRANA) lie on the Cytoplasmic side of the membrane.

Belongs to the glutamate-gated ion channel (TC 1.A.10.1) family.

It is found in the cell membrane. Its subcellular location is the postsynaptic cell membrane. In terms of biological role, receptor for glutamate. L-glutamate acts as an excitatory neurotransmitter at many synapses in the central nervous system. The postsynaptic actions of Glu are mediated by a variety of receptors that are named according to their selective agonists. This Gallus gallus (Chicken) protein is Probable glutamate receptor (KBP).